Here is a 119-residue protein sequence, read N- to C-terminus: Putative F-box protein At2g39415 (119 aa).

Residues I37–L92 form the F-box domain.

The protein is Putative F-box protein At2g39415 of Arabidopsis thaliana (Mouse-ear cress).